The chain runs to 243 residues: UMP-CMP kinase 1 (243 aa).

29–34 (GSGKGT) lines the ATP pocket. The segment at 49–78 (SAGDLLREEAKYDTEQGTMIKNLMNEGKLV) is NMP. A ribonucleoside 5'-phosphate contacts are provided by residues Arg55, 76 to 78 (KLV), and 103 to 106 (GFPR). Asn110 contacts CMP. Residues 141-149 (NRNQGRDDD) form an LID region. Position 142 (Arg142) interacts with ATP. Positions 146 and 157 each coordinate a ribonucleoside 5'-phosphate. Arg185 lines the ATP pocket.

The protein belongs to the adenylate kinase family. UMP-CMP kinase subfamily. In terms of assembly, monomer. It depends on Mg(2+) as a cofactor.

It localises to the cytoplasm. Its subcellular location is the nucleus. It catalyses the reaction UMP + ATP = UDP + ADP. The catalysed reaction is CMP + ATP = CDP + ADP. It carries out the reaction dCMP + ATP = dCDP + ADP. Catalyzes the phosphorylation of pyrimidine nucleoside monophosphates at the expense of ATP. Plays an important role in de novo pyrimidine nucleotide biosynthesis. Has preference for UMP and CMP as phosphate acceptors. This is UMP-CMP kinase 1 from Oryza sativa subsp. japonica (Rice).